The sequence spans 335 residues: Probable cytosolic iron-sulfur protein assembly protein Ciao1 (335 aa).

WD repeat units follow at residues 12-51 (GHKG…WSTK), 57-96 (GHKR…FECN), 101-140 (GHEN…EFEC), 146-185 (SHTQ…NDWD), 192-231 (SHTS…NSAG), 250-289 (QHSR…KPDE), and 301-335 (AHDQ…KVTE).

This sequence belongs to the WD repeat CIA1 family.

In terms of biological role, essential component of the cytosolic iron-sulfur (Fe/S) protein assembly machinery. Required for the maturation of extramitochondrial Fe/S proteins. This is Probable cytosolic iron-sulfur protein assembly protein Ciao1 from Drosophila erecta (Fruit fly).